The following is a 384-amino-acid chain: GDSL esterase/lipase At1g71691 (384 aa).

The signal sequence occupies residues 1 to 27 (MAFHFRRLCFFSALLAVVLQLLHGVSG). Ser62 serves as the catalytic Nucleophile. Catalysis depends on residues Asp348 and His351.

It belongs to the 'GDSL' lipolytic enzyme family.

It is found in the secreted. The polypeptide is GDSL esterase/lipase At1g71691 (Arabidopsis thaliana (Mouse-ear cress)).